A 37-amino-acid chain; its full sequence is MKVRPSVKPICEKCKVIRRKGKVMVICENPKHKQKQG.

It belongs to the bacterial ribosomal protein bL36 family.

The polypeptide is Large ribosomal subunit protein bL36 (Bacillus pumilus (strain SAFR-032)).